The sequence spans 1040 residues: Multidrug resistance protein MdtB (1040 aa).

12 helical membrane passes run 16-36 (FIMRPVATTLLMVAILLAGII), 347-367 (LMMAIALVVMIIYLFLRNIPA), 369-389 (IIPGVAVPLSLIGTFAVMVFL), 396-416 (LTLMALTIATGFVVDDAIVVI), 440-460 (IGFTIISLTFSLIAVLIPLLF), 472-492 (FAITLAVAILISAVVSLTLTP), 537-557 (WLTLSVALSTLLLSVLLWVFI), 863-883 (LGSTVWLIVAAVVAMYIVLGI), 888-908 (FIHPITILSTLPTAGVGALLA), 911-931 (IAGSELDVIAIIGIILLIGIV), 968-988 (ILMTTLAALLGALPLMLSTGV), and 998-1018 (IGMVGGLIVSQVLTLFTTPVI).

This sequence belongs to the resistance-nodulation-cell division (RND) (TC 2.A.6) family. MdtB subfamily. In terms of assembly, part of a tripartite efflux system composed of MdtA, MdtB and MdtC. MdtB forms a heteromultimer with MdtC.

It localises to the cell inner membrane. Functionally, the MdtABC tripartite complex confers resistance against novobiocin and deoxycholate. This is Multidrug resistance protein MdtB from Escherichia coli O7:K1 (strain IAI39 / ExPEC).